Here is a 505-residue protein sequence, read N- to C-terminus: Serine carboxypeptidase-like 47 (505 aa).

Residues 1–22 (MEAKTFFLFMLFIFSQSWLSTS) form the signal peptide. N-linked (GlcNAc...) asparagine glycosylation is found at asparagine 37, asparagine 86, and asparagine 122. 3 disulfides stabilise this stretch: cysteine 138–cysteine 378, cysteine 306–cysteine 321, and cysteine 344–cysteine 349. The active site involves serine 228. A glycan (N-linked (GlcNAc...) asparagine) is linked at asparagine 301. Residue aspartate 416 is part of the active site. N-linked (GlcNAc...) asparagine glycosylation is found at asparagine 432 and asparagine 444. Residue histidine 473 is part of the active site.

It belongs to the peptidase S10 family. Expressed in roots, flowers and siliques.

The protein localises to the secreted. Its function is as follows. Probable carboxypeptidase. The chain is Serine carboxypeptidase-like 47 (SCPL47) from Arabidopsis thaliana (Mouse-ear cress).